The following is a 71-amino-acid chain: MVESTFEPKITAESVGQVIRAHLRVLKLTRKPSREEFLTIAKVAGVGILAVGAIGFIIYVLLTMLPQWVAQ.

Residues 43-63 (VAGVGILAVGAIGFIIYVLLT) traverse the membrane as a helical segment.

It belongs to the SecE/SEC61-gamma family. In terms of assembly, component of the Sec protein translocase complex. Heterotrimer consisting of SecY (alpha), SecG (beta) and SecE (gamma) subunits. The heterotrimers can form oligomers, although 1 heterotrimer is thought to be able to translocate proteins. Interacts with the ribosome. May interact with SecDF, and other proteins may be involved.

It localises to the cell membrane. Its function is as follows. Essential subunit of the Sec protein translocation channel SecYEG. Clamps together the 2 halves of SecY. May contact the channel plug during translocation. This chain is Protein translocase subunit SecE, found in Methanosarcina barkeri (strain Fusaro / DSM 804).